Consider the following 111-residue polypeptide: Putative pterin-4-alpha-carbinolamine dehydratase (111 aa).

The protein belongs to the pterin-4-alpha-carbinolamine dehydratase family.

It carries out the reaction (4aS,6R)-4a-hydroxy-L-erythro-5,6,7,8-tetrahydrobiopterin = (6R)-L-erythro-6,7-dihydrobiopterin + H2O. The chain is Putative pterin-4-alpha-carbinolamine dehydratase from Alkaliphilus metalliredigens (strain QYMF).